Reading from the N-terminus, the 95-residue chain is Opiscorpine-1 (95 aa).

Residues Met-1 to Cys-19 form the signal peptide. In terms of domain architecture, BetaSPN-type CS-alpha/beta spans Glu-55–Tyr-95. Disulfide bonds link Cys-58–Cys-82, Cys-68–Cys-87, and Cys-72–Cys-89.

Belongs to the long chain scorpion toxin family. Class 3 subfamily. In terms of tissue distribution, expressed by the venom gland.

It is found in the secreted. Functionally, the short synthetic peptide (20-54) has antimicrobial activity against the yeasts F.culmorum (IC(50)=8.8 uM) and F.oxysporum (IC(50)=10 uM), and the Gram-negative bacteria E.coli. The sequence is that of Opiscorpine-1 from Opistophthalmus carinatus (African yellow leg scorpion).